The primary structure comprises 139 residues: D-ribose pyranase (139 aa).

The active-site Proton donor is histidine 20. Substrate-binding positions include aspartate 28, histidine 106, and 128–130 (YAN).

It belongs to the RbsD / FucU family. RbsD subfamily. As to quaternary structure, homodecamer.

The protein localises to the cytoplasm. The catalysed reaction is beta-D-ribopyranose = beta-D-ribofuranose. It participates in carbohydrate metabolism; D-ribose degradation; D-ribose 5-phosphate from beta-D-ribopyranose: step 1/2. Its function is as follows. Catalyzes the interconversion of beta-pyran and beta-furan forms of D-ribose. The polypeptide is D-ribose pyranase (Enterobacter sp. (strain 638)).